The chain runs to 146 residues: Large ribosomal subunit protein uL15 (146 aa).

The interval Met1–Thr39 is disordered.

This sequence belongs to the universal ribosomal protein uL15 family. In terms of assembly, part of the 50S ribosomal subunit.

Its function is as follows. Binds to the 23S rRNA. The chain is Large ribosomal subunit protein uL15 from Nocardioides sp. (strain ATCC BAA-499 / JS614).